We begin with the raw amino-acid sequence, 311 residues long: tRNA pseudouridine synthase B (311 aa).

The active-site Nucleophile is Asp49.

It belongs to the pseudouridine synthase TruB family. Type 1 subfamily.

The catalysed reaction is uridine(55) in tRNA = pseudouridine(55) in tRNA. Its function is as follows. Responsible for synthesis of pseudouridine from uracil-55 in the psi GC loop of transfer RNAs. In Actinobacillus succinogenes (strain ATCC 55618 / DSM 22257 / CCUG 43843 / 130Z), this protein is tRNA pseudouridine synthase B.